We begin with the raw amino-acid sequence, 175 residues long: MNLIFTRIIRRFGEGKRKTPFPGDPILVPDEPYDSKIQESQLSPMPQIDAKLINHLERLSLVRFDSEQAVANLRSSIRVAKRLELVDVEGVEPMHTVWEDQECPTFEDVEEDPLPIEEVFRNASLRFDDFFVTPPGNLPLESKERFDLNVINEWDTIGKPVAPEVKLTRMTERKK.

It belongs to the GatC family. As to quaternary structure, subunit of the heterotrimeric GatCAB amidotransferase (AdT) complex, composed of A, B and C subunits.

Its subcellular location is the mitochondrion. The catalysed reaction is L-glutamyl-tRNA(Gln) + L-glutamine + ATP + H2O = L-glutaminyl-tRNA(Gln) + L-glutamate + ADP + phosphate + H(+). Functionally, allows the formation of correctly charged Gln-tRNA(Gln) through the transamidation of misacylated Glu-tRNA(Gln) in the mitochondria. The reaction takes place in the presence of glutamine and ATP through an activated gamma-phospho-Glu-tRNA(Gln). This chain is Glutamyl-tRNA(Gln) amidotransferase subunit C, mitochondrial, found in Caenorhabditis elegans.